The primary structure comprises 552 residues: Chaperonin GroEL (552 aa).

ATP contacts are provided by residues T29–P32, K50, D86–T90, G420, and D501.

It belongs to the chaperonin (HSP60) family. In terms of assembly, forms a cylinder of 14 subunits composed of two heptameric rings stacked back-to-back. Interacts with the co-chaperonin GroES.

The protein resides in the cytoplasm. The enzyme catalyses ATP + H2O + a folded polypeptide = ADP + phosphate + an unfolded polypeptide.. Its function is as follows. Together with its co-chaperonin GroES, plays an essential role in assisting protein folding. The GroEL-GroES system forms a nano-cage that allows encapsulation of the non-native substrate proteins and provides a physical environment optimized to promote and accelerate protein folding. The sequence is that of Chaperonin GroEL from Wolbachia pipientis subsp. Culex pipiens (strain wPip).